Reading from the N-terminus, the 271-residue chain is MQQNKKLGQCFLKDKNIVKKAINAANINKNDIVLEIGLGKGILTKELAKQCKKVIVIELDKKLEIFWEDIIKEYPNVEIIWNDALKVNLKELGFNKVVANLPYQISSPITFKLLDCDFEVAVLMYQYEFAKRMGAPSGTKEYSRLSVSVQYRAVVDYVCKVSPSAFSPKPKVDSAIVKITKKNEPIHNIDNWEFFDGFNRALFQHRNKNTKKALIHSAHEINMDRDKLKELLNSNEIMEFNDLLGKKVYTLSLKEIGVLCNNLYKIINKSK.

Positions 12, 37, 58, 83, and 100 each coordinate S-adenosyl-L-methionine.

Belongs to the class I-like SAM-binding methyltransferase superfamily. rRNA adenine N(6)-methyltransferase family. RsmA subfamily.

Its subcellular location is the cytoplasm. Specifically dimethylates two adjacent adenosines in the loop of a conserved hairpin near the 3'-end of 16S rRNA in the 30S particle. May play a critical role in biogenesis of 30S subunits. The polypeptide is Probable ribosomal RNA small subunit methyltransferase A (Methanococcus aeolicus (strain ATCC BAA-1280 / DSM 17508 / OCM 812 / Nankai-3)).